Here is a 515-residue protein sequence, read N- to C-terminus: Maturase K (515 aa).

This sequence belongs to the intron maturase 2 family. MatK subfamily.

Its subcellular location is the plastid. The protein localises to the chloroplast. Usually encoded in the trnK tRNA gene intron. Probably assists in splicing its own and other chloroplast group II introns. This chain is Maturase K, found in Pinus patula (Mexican weeping pine).